A 253-amino-acid polypeptide reads, in one-letter code: MSEKPKVYQGVRVKMTVKELLQQRRAHQATSGANLSGSSGLHLPDTTMPSSAGLYFEPEPTSSTPSYFQTREFSTCVSCEEIPSCLDQIFESYLQTDTLPEPLLNSAQIAPHYFPESCQVAPFCHNQSLIPGSPSDSSSLSGSFDCSYSPTQLPSYTPENYSSPPSLDSLHSSLPEEGYFCQHWPSHPQYNHSSPATPSSVCYYASCEAEHLDALRTTEFFSYSGMDCADFAPPVATTGDFYKRETSCDACYS.

Positions 5 to 27 constitute an OCA domain; the sequence is PKVYQGVRVKMTVKELLQQRRAH.

Belongs to the POU2AF family. In terms of assembly, interacts with POU2F3 in a DNA-dependent manner; this interaction increases POU2F3 transactivation activity. Expressed in tuft cells.

It is found in the cytoplasm. It localises to the nucleus. In terms of biological role, transcriptional coactivator that specifically associates with POU2F3. This complex drives the development of tuft cells, a rare a rare chemosensory cells that coordinate immune and neural functions within mucosal epithelial tissues. The chain is POU Class 2 homeobox-associating factor 3 from Mus musculus (Mouse).